We begin with the raw amino-acid sequence, 217 residues long: MAPRPRFDRRAPVRELPNINDRISYPQLRVVDSDGSQLGVISREEALEVSKERELDLVLVSEKADPPVCRIMDYGKFKFEQEKKAKEAKKKSHQTEVKEVKMRYKIDSHDYDVRIGQAQRFLKAGDKVKCTVIFRGREIQHTALAEVLLRRMAKDLEEKAEIQQSPKREGRNMIMFLTPRKTPLLKKDDKDSSVHQAIRTIPAPPRSTAAKVAAPQA.

This sequence belongs to the IF-3 family. In terms of assembly, monomer.

It localises to the cytoplasm. Its function is as follows. IF-3 binds to the 30S ribosomal subunit and shifts the equilibrium between 70S ribosomes and their 50S and 30S subunits in favor of the free subunits, thus enhancing the availability of 30S subunits on which protein synthesis initiation begins. The polypeptide is Translation initiation factor IF-3 (Synechococcus sp. (strain CC9902)).